Reading from the N-terminus, the 432-residue chain is Enolase (432 aa).

Q167 serves as a coordination point for (2R)-2-phosphoglycerate. The active-site Proton donor is E209. Residues D246, E291, and D318 each coordinate Mg(2+). 4 residues coordinate (2R)-2-phosphoglycerate: K343, R372, S373, and K394. Residue K343 is the Proton acceptor of the active site.

Belongs to the enolase family. In terms of assembly, component of the RNA degradosome, a multiprotein complex involved in RNA processing and mRNA degradation. Requires Mg(2+) as cofactor.

Its subcellular location is the cytoplasm. It localises to the secreted. The protein localises to the cell surface. It carries out the reaction (2R)-2-phosphoglycerate = phosphoenolpyruvate + H2O. It participates in carbohydrate degradation; glycolysis; pyruvate from D-glyceraldehyde 3-phosphate: step 4/5. In terms of biological role, catalyzes the reversible conversion of 2-phosphoglycerate (2-PG) into phosphoenolpyruvate (PEP). It is essential for the degradation of carbohydrates via glycolysis. This Colwellia psychrerythraea (strain 34H / ATCC BAA-681) (Vibrio psychroerythus) protein is Enolase.